The sequence spans 95 residues: MPSQMEHAMETMMLTFHRFAGEKNYLTKEDLRVLMEREFPGFLENQKDPLAVDKIMKDLDQCRDGKVGFQSFLSLVAGLIIACNDYFVVHMKQKK.

N6-acetyllysine occurs at positions 23, 28, 54, and 57. Residues 47 to 82 (KDPLAVDKIMKDLDQCRDGKVGFQSFLSLVAGLIIA) form the EF-hand domain. Positions 60–71 (DQCRDGKVGFQS) are ancestral calcium site.

Belongs to the S-100 family. Heterotetramer containing 2 light chains of S100A10/p11 and 2 heavy chains of ANXA2/p36. Interacts with SCN10A. Interacts with TASOR.

Its function is as follows. Because S100A10 induces the dimerization of ANXA2/p36, it may function as a regulator of protein phosphorylation in that the ANXA2 monomer is the preferred target (in vitro) of tyrosine-specific kinase. The sequence is that of Protein S100-A10 (S100a10) from Rattus norvegicus (Rat).